The primary structure comprises 550 residues: Methyl-coenzyme M reductase subunit alpha (550 aa).

Gln147 serves as a coordination point for coenzyme F430. Coenzyme B-binding positions include Arg225, 256–257, and Arg270; that span reads KH. His257 is modified (pros-methylhistidine). Residue Arg271 is modified to 5-methylarginine. Residue Tyr333 participates in coenzyme M binding. Gln400 is subject to 2-methylglutamine. Residue Tyr444 coordinates coenzyme M. Gly445 is modified (1-thioglycine). (Z)-2,3-didehydroaspartate is present on Asp450. Cys452 carries the post-translational modification S-methylcysteine.

This sequence belongs to the methyl-coenzyme M reductase alpha subunit family. As to quaternary structure, MCR is a hexamer of two alpha, two beta, and two gamma chains, forming a dimer of heterotrimers. The cofactor is coenzyme F430. In terms of processing, the alpha subunit contains six modified amino acids near the active site region. Is methylated on His-257, Arg-271, Gln-400 and Cys-452, probably by the action of specific S-adenosylmethionine-dependent methyltransferases. Also contains a thioglycine at position 445, forming a thiopeptide bond. Contains a didehydroaspartate residue at position 450. The methylation on C5 of Arg-271 is a post-translational methylation not essential in vivo, but which plays a role for the stability and structural integrity of MCR.

It localises to the cytoplasm. It carries out the reaction coenzyme B + methyl-coenzyme M = methane + coenzyme M-coenzyme B heterodisulfide. The protein operates within one-carbon metabolism; methyl-coenzyme M reduction; methane from methyl-coenzyme M: step 1/1. Component of the methyl-coenzyme M reductase (MCR) I that catalyzes the reductive cleavage of methyl-coenzyme M (CoM-S-CH3 or 2-(methylthio)ethanesulfonate) using coenzyme B (CoB or 7-mercaptoheptanoylthreonine phosphate) as reductant which results in the production of methane and the mixed heterodisulfide of CoB and CoM (CoM-S-S-CoB). This is the final step in methanogenesis. The polypeptide is Methyl-coenzyme M reductase subunit alpha (mcrA) (Methanothermobacter thermautotrophicus (strain ATCC 29096 / DSM 1053 / JCM 10044 / NBRC 100330 / Delta H) (Methanobacterium thermoautotrophicum)).